The following is a 91-amino-acid chain: Small ribosomal subunit protein bS16 (91 aa).

This sequence belongs to the bacterial ribosomal protein bS16 family.

The protein is Small ribosomal subunit protein bS16 of Staphylococcus haemolyticus (strain JCSC1435).